We begin with the raw amino-acid sequence, 233 residues long: Methyltransferase srdJ (233 aa).

The disordered stretch occupies residues 1–32 (MFQVQTAGTRTGTSSPDTTTSEAGLGSTPPMP). Residues 9–21 (TRTGTSSPDTTTS) are compositionally biased toward low complexity. Residues W40, W52, and G81 each contribute to the S-adenosyl-L-methionine site. A Required for methyltransferase activity motif is present at residues 140–146 (EISSQKY).

Belongs to the methyltransferase superfamily.

Methyltransferase; part of the gene cluster that mediates the biosynthesis of sordarial, a salicylic aldehyde structurally related to the phytotoxin pyriculol. The most interesting aspect of this pathway is formation of an aromatic product from the highly reducing polyketide synthase srdA. SrdA synthesizes a reduced polyketide chain from one molecule of acetyl-CoA and five molecules of malonyl-CoA. The polyketide chain is then reductively released as an aldehyde. The oxidoreductases srdC, srdD and srdE then oxidize one of the hydroxy groups to facilitate the intramolecular aldol condensation, followed by dehydration to yield a salicylic aldehyde. This aldehyde can undergo facile reduction by endogenous reductases to yield the alcohol 1-hydroxy-2-hydroxymethyl-3-pent-1,3-dienylbenzene. The flavin-dependent srdI counteract against the propensity of the aldehydes to be reduced under physiological conditions and is responsible for reoxidizing 1-hydroxy-2-hydroxymethyl-3-pent-1,3-dienylbenzene back to the salicylic aldehyde. This salicylic aldehyde is then selectively epoxidized by the cupin-domain-containing oxidoreductase srdB to yield the epoxide, which can be hydrolyzed stereoselectively by the hydrolase srdG to give the final product sordarial. This is Methyltransferase srdJ from Neurospora crassa (strain ATCC 24698 / 74-OR23-1A / CBS 708.71 / DSM 1257 / FGSC 987).